Here is a 424-residue protein sequence, read N- to C-terminus: MLDIKQLRTDFDQIKEKLAHRGEDLADFDKFGELDQKRRELIGKTEVLKSRRNEVSQQVAVLKREKKDADHIIQEMREVGDEIKKLDDELRTVEESLQHILFSIPNIPHDTVPVGETEDDNVEVRKWGEQPAFSFEPKPHWDVADELNILDFERAGKVTGSRFVFYKGLGARLERALYNFMLDLHVDEFGFTEVLPPYMVNRASMTGTGQLPKFEEDAFKIREEDYFLIPTAEVPITNMHRDEIIEGEQLPINYAAFSACFRSEAGSAGRDTRGLIRQHQFNKVELVKFVRPEDSYEELEKLTNQAEKVLQLLNLPYRVMSMCTGDLGFTAAKKYDIEVWIPSQDTYREISSCSNFEAFQARRANIRFRPEPKAKPEHVHTLNGSGLAVGRTVAAILENYQQEDGTVIIPEVLRPYMGNKEVMK.

231–233 is an L-serine binding site; it reads TAE. Residue 262 to 264 participates in ATP binding; that stretch reads RSE. An L-serine-binding site is contributed by glutamate 285. Residue 349–352 participates in ATP binding; sequence EISS. Serine 385 contributes to the L-serine binding site.

Belongs to the class-II aminoacyl-tRNA synthetase family. Type-1 seryl-tRNA synthetase subfamily. Homodimer. The tRNA molecule binds across the dimer.

Its subcellular location is the cytoplasm. The enzyme catalyses tRNA(Ser) + L-serine + ATP = L-seryl-tRNA(Ser) + AMP + diphosphate + H(+). The catalysed reaction is tRNA(Sec) + L-serine + ATP = L-seryl-tRNA(Sec) + AMP + diphosphate + H(+). Its pathway is aminoacyl-tRNA biosynthesis; selenocysteinyl-tRNA(Sec) biosynthesis; L-seryl-tRNA(Sec) from L-serine and tRNA(Sec): step 1/1. In terms of biological role, catalyzes the attachment of serine to tRNA(Ser). Is also able to aminoacylate tRNA(Sec) with serine, to form the misacylated tRNA L-seryl-tRNA(Sec), which will be further converted into selenocysteinyl-tRNA(Sec). This Bacillus pumilus (strain SAFR-032) protein is Serine--tRNA ligase.